The following is a 334-amino-acid chain: MIVIPRYTIIKEKASGRIPEILDNLNLKNPLVITGKNTKKYNKDFDFIYYDEIETSDLENIKNYAKDYDSIIGIGGGRPIDIGKLIAHKSKKPFLSVPTTASNDGIASPIVSLTQPSYMTEAPIAIIADIDIIKKSPKKLLSAGMGDIVSNITAVLDWELGKIEKSEKYSDSSGIFSKTIAIELMDYVLNSNLEEYPKKLVKALIGSGISIAIAHSSRPASGSEHLFSHALDTMKEKYDIDTTSLHGEQCGVGTLAIAQIYLEEGKLEVETFEMLKNSLKAVDAPVTAEQLGFDEEIIIEALSSANTLRKRHTILRNGISKEKAREILEKSEII.

NAD(+) contacts are provided by residues 77–81 (GRPID) and 99–102 (TTAS). Residue aspartate 104 participates in substrate binding. Serine 108 contacts NAD(+). Position 147 (aspartate 147) interacts with substrate. The Zn(2+) site is built by aspartate 147 and histidine 225. Residue histidine 229 coordinates substrate. Histidine 246 contacts Zn(2+).

This sequence belongs to the glycerol-1-phosphate dehydrogenase family. The cofactor is Zn(2+).

Its subcellular location is the cytoplasm. The catalysed reaction is sn-glycerol 1-phosphate + NAD(+) = dihydroxyacetone phosphate + NADH + H(+). It catalyses the reaction sn-glycerol 1-phosphate + NADP(+) = dihydroxyacetone phosphate + NADPH + H(+). It participates in membrane lipid metabolism; glycerophospholipid metabolism. Functionally, catalyzes the NAD(P)H-dependent reduction of dihydroxyacetonephosphate (DHAP or glycerone phosphate) to glycerol 1-phosphate (G1P). The G1P thus generated is used as the glycerophosphate backbone of phospholipids in the cellular membranes of Archaea. The protein is Glycerol-1-phosphate dehydrogenase [NAD(P)+] of Methanococcus maripaludis (strain C6 / ATCC BAA-1332).